The following is a 316-amino-acid chain: Olfactory receptor 2T11 (316 aa).

Residues 1–22 (MTNTSSSDFTLLGLLVNSEAAG) lie on the Extracellular side of the membrane. N-linked (GlcNAc...) asparagine glycosylation is present at N3. A helical transmembrane segment spans residues 23–46 (IVFTVILAVFLGAVTANLVMIFLI). At 47–54 (QVDSRLHT) the chain is on the cytoplasmic side. Residues 55 to 76 (PMYFLLSQLSIMDTLFICTTVP) traverse the membrane as a helical segment. Topologically, residues 77–97 (KLLADMVSKEKIISFVACGIQ) are extracellular. C94 and C186 are disulfide-bonded. Residues 98 to 117 (IFLYLTMIGSEFFLLGLMAY) traverse the membrane as a helical segment. Over 118–136 (DCYVAVCNPLRYPVLMNRK) the chain is Cytoplasmic. A helical transmembrane segment spans residues 137-155 (KCLLLAAGAWFGGSLDGFL). Residues 156–192 (LTPITMNVPYCGSRSINHFFCEIPAVLKLACADTSLY) lie on the Extracellular side of the membrane. Residues 193 to 216 (ETLMYICCVLMLLIPISIISTSYS) form a helical membrane-spanning segment. Topologically, residues 217 to 233 (LILLTIHRMPSAEGRKK) are cytoplasmic. Residues 234–256 (AFTTCSSHLTVVSIFYGAAFYTY) traverse the membrane as a helical segment. Topologically, residues 257–269 (VLPQSFHTPEQDK) are extracellular. Residues 270 to 289 (VVSAFYTIVTPMLNPLIYSL) form a helical membrane-spanning segment. Topologically, residues 290–316 (RNKDVIGAFKKVFACCSSAQKVATSDA) are cytoplasmic.

This sequence belongs to the G-protein coupled receptor 1 family.

The protein resides in the cell membrane. Its function is as follows. Odorant receptor. The protein is Olfactory receptor 2T11 (OR2T11) of Homo sapiens (Human).